The chain runs to 602 residues: Elongation factor 4 (602 aa).

The tr-type G domain occupies 7–189 (SRIRNFSIIA…SIVQQVPPPA (183 aa)). Residues 19-24 (DHGKST) and 136-139 (NKID) each bind GTP.

It belongs to the TRAFAC class translation factor GTPase superfamily. Classic translation factor GTPase family. LepA subfamily.

Its subcellular location is the cell inner membrane. It catalyses the reaction GTP + H2O = GDP + phosphate + H(+). Its function is as follows. Required for accurate and efficient protein synthesis under certain stress conditions. May act as a fidelity factor of the translation reaction, by catalyzing a one-codon backward translocation of tRNAs on improperly translocated ribosomes. Back-translocation proceeds from a post-translocation (POST) complex to a pre-translocation (PRE) complex, thus giving elongation factor G a second chance to translocate the tRNAs correctly. Binds to ribosomes in a GTP-dependent manner. This is Elongation factor 4 from Picosynechococcus sp. (strain ATCC 27264 / PCC 7002 / PR-6) (Agmenellum quadruplicatum).